The primary structure comprises 417 residues: NADH-quinone oxidoreductase subunit D (417 aa).

This sequence belongs to the complex I 49 kDa subunit family. In terms of assembly, NDH-1 is composed of 14 different subunits. Subunits NuoB, C, D, E, F, and G constitute the peripheral sector of the complex.

It is found in the cell inner membrane. It carries out the reaction a quinone + NADH + 5 H(+)(in) = a quinol + NAD(+) + 4 H(+)(out). In terms of biological role, NDH-1 shuttles electrons from NADH, via FMN and iron-sulfur (Fe-S) centers, to quinones in the respiratory chain. The immediate electron acceptor for the enzyme in this species is believed to be ubiquinone. Couples the redox reaction to proton translocation (for every two electrons transferred, four hydrogen ions are translocated across the cytoplasmic membrane), and thus conserves the redox energy in a proton gradient. The polypeptide is NADH-quinone oxidoreductase subunit D (Nitrosospira multiformis (strain ATCC 25196 / NCIMB 11849 / C 71)).